The chain runs to 70 residues: uncharacterized protein (70 aa).

The helical transmembrane segment at 12-32 threads the bilayer; it reads VLFMNFFSVFVCTIGTLFLVF.

The protein localises to the membrane. This is an uncharacterized protein from Saccharomyces cerevisiae (strain ATCC 204508 / S288c) (Baker's yeast).